The primary structure comprises 78 residues: Short neurotoxin OH-46 (78 aa).

Positions 1-21 (MKNLLLTFLVVTIVCLDLGYT) are cleaved as a signal peptide. 4 disulfide bridges follow: Cys-24/Cys-40, Cys-33/Cys-58, Cys-62/Cys-70, and Cys-71/Cys-76.

Belongs to the three-finger toxin family. Short-chain subfamily. As to expression, expressed by the venom gland.

It is found in the secreted. Its function is as follows. This three-finger toxin binds and inhibits the nicotinic acetylcholine receptor (nAChR). The protein is Short neurotoxin OH-46 of Ophiophagus hannah (King cobra).